The chain runs to 563 residues: Alpha-humulene synthase (563 aa).

The Mg(2+) site is built by aspartate 316, aspartate 320, aspartate 461, and glutamate 469. The DDXXD motif signature appears at 316 to 320 (DDIYD).

Belongs to the terpene synthase family. Tpsa subfamily. The cofactor is Mg(2+). It depends on Mn(2+) as a cofactor. As to expression, expressed in trichomes, cones and young leaves.

The enzyme catalyses (2E,6E)-farnesyl diphosphate = alpha-humulene + diphosphate. It functions in the pathway sesquiterpene biosynthesis. It participates in secondary metabolite biosynthesis; terpenoid biosynthesis. Its function is as follows. Sesquiterpene synthase that catalyzes the formation of alpha-humulene. Can use farnesyl diphosphate (FPP) as substrate, but not geranyl diphosphate (GPP) or geranylgeranyl diphosphate (GGPP). The protein is Alpha-humulene synthase of Humulus lupulus (European hop).